We begin with the raw amino-acid sequence, 180 residues long: Adenine phosphoribosyltransferase (180 aa).

A2 bears the N-acetylalanine mark. Phosphoserine occurs at positions 4, 15, and 30. A Phosphotyrosine modification is found at Y60. The residue at position 66 (S66) is a Phosphoserine. At K114 the chain carries N6-acetyllysine. T135 is modified (phosphothreonine).

This sequence belongs to the purine/pyrimidine phosphoribosyltransferase family. Homodimer.

Its subcellular location is the cytoplasm. The enzyme catalyses AMP + diphosphate = 5-phospho-alpha-D-ribose 1-diphosphate + adenine. It participates in purine metabolism; AMP biosynthesis via salvage pathway; AMP from adenine: step 1/1. Catalyzes a salvage reaction resulting in the formation of AMP, that is energically less costly than de novo synthesis. This Cricetulus griseus (Chinese hamster) protein is Adenine phosphoribosyltransferase.